A 326-amino-acid polypeptide reads, in one-letter code: B3 domain-containing protein At5g60130 (326 aa).

The segment at residues 12–110 is a DNA-binding region (TF-B3); the sequence is PKFFKVYLPD…CFHFCIYEHR (99 aa). A disordered region spans residues 124 to 222; it reads EEIKVESDSD…DEDERQYLDD (99 aa). The span at 143–199 shows a compositional bias: acidic residues; that stretch reads LSLDEDDDDSDYNCGEDNDSDDYADEAAVEKDDNDADDEDVDNVADDVPVEDDDYVE.

The protein resides in the nucleus. The sequence is that of B3 domain-containing protein At5g60130 from Arabidopsis thaliana (Mouse-ear cress).